The primary structure comprises 454 residues: Ribosomal protein uS12 methylthiotransferase RimO (454 aa).

The region spanning 14-125 (SKVAFSHVGC…IAKVLDRVEQ (112 aa)) is the MTTase N-terminal domain. 6 residues coordinate [4Fe-4S] cluster: Cys-23, Cys-59, Cys-88, Cys-163, Cys-167, and Cys-170. The Radical SAM core domain occupies 149–378 (DKNKFVAYLR…ISVQQNISKD (230 aa)). The TRAM domain maps to 381-452 (QTYVGSKMKI…EYDLYGEIIK (72 aa)).

It belongs to the methylthiotransferase family. RimO subfamily. [4Fe-4S] cluster serves as cofactor.

It is found in the cytoplasm. It catalyses the reaction L-aspartate(89)-[ribosomal protein uS12]-hydrogen + (sulfur carrier)-SH + AH2 + 2 S-adenosyl-L-methionine = 3-methylsulfanyl-L-aspartate(89)-[ribosomal protein uS12]-hydrogen + (sulfur carrier)-H + 5'-deoxyadenosine + L-methionine + A + S-adenosyl-L-homocysteine + 2 H(+). In terms of biological role, catalyzes the methylthiolation of an aspartic acid residue of ribosomal protein uS12. This Prochlorococcus marinus (strain AS9601) protein is Ribosomal protein uS12 methylthiotransferase RimO.